A 204-amino-acid polypeptide reads, in one-letter code: Holliday junction branch migration complex subunit RuvA (204 aa).

The interval 1 to 64 (MIGRLQGILL…EDAHLLFGFA (64 aa)) is domain I. Residues 65-143 (QKTDRTLFRE…GVKQSDFFVE (79 aa)) are domain II. A flexible linker region spans residues 144-155 (STHIPLSPSIES). Residues 156-204 (HSESSSDEAISALIALGYKPVEAEKMVKRVAKPELTSEQVIREALKAAL) are domain III.

It belongs to the RuvA family. As to quaternary structure, homotetramer. Forms an RuvA(8)-RuvB(12)-Holliday junction (HJ) complex. HJ DNA is sandwiched between 2 RuvA tetramers; dsDNA enters through RuvA and exits via RuvB. An RuvB hexamer assembles on each DNA strand where it exits the tetramer. Each RuvB hexamer is contacted by two RuvA subunits (via domain III) on 2 adjacent RuvB subunits; this complex drives branch migration. In the full resolvosome a probable DNA-RuvA(4)-RuvB(12)-RuvC(2) complex forms which resolves the HJ.

It is found in the cytoplasm. Its function is as follows. The RuvA-RuvB-RuvC complex processes Holliday junction (HJ) DNA during genetic recombination and DNA repair, while the RuvA-RuvB complex plays an important role in the rescue of blocked DNA replication forks via replication fork reversal (RFR). RuvA specifically binds to HJ cruciform DNA, conferring on it an open structure. The RuvB hexamer acts as an ATP-dependent pump, pulling dsDNA into and through the RuvAB complex. HJ branch migration allows RuvC to scan DNA until it finds its consensus sequence, where it cleaves and resolves the cruciform DNA. The sequence is that of Holliday junction branch migration complex subunit RuvA from Haemophilus influenzae (strain PittEE).